The primary structure comprises 226 residues: MGPLPRTVELFYDVLSPYSWLGFEILCRYQNIWNINLQLRPSLITGIMKDSGNKPPGLLPRKGLYMANDLKLLRHHLQIPIHFPKDFLSVMLEKGSLSAMRFLTAVNLEHPEMLEKASRELWMRVWSRNEDITEPQSILAAAEKAGMSAEQAQGLLEKIATPKVKNQLKETTEAACRYGAFGLPITVAHVDGQTHMLFGSDRMELLAHLLGEKWMGPIPPAVNARL.

Glutathione is bound at residue S16–Y18. N6-succinyllysine is present on K49. N53 is a binding site for glutathione. K71 and K85 each carry N6-acetyllysine. K116 is modified (N6-acetyllysine; alternate). K116 carries the post-translational modification N6-succinyllysine; alternate. Position 144 is an N6-succinyllysine (K144). K158 bears the N6-acetyllysine; alternate mark. Position 158 is an N6-succinyllysine; alternate (K158). 2 positions are modified to N6-acetyllysine: K165 and K169. Glutathione-binding positions include L183 and S200–D201.

The protein belongs to the GST superfamily. Kappa family. In terms of assembly, homodimer. In terms of tissue distribution, ubiquitous.

The protein resides in the peroxisome. It carries out the reaction RX + glutathione = an S-substituted glutathione + a halide anion + H(+). In terms of biological role, glutathione S-transferase that catalyzes the conjugation of glutathione to exogenous and endogenous compounds. Significant glutathione conjugating activity is found only with the model substrate, 1-chloro-2,4-dinitrobenzene (CDNB). The sequence is that of Glutathione S-transferase kappa 1 (GSTK1) from Homo sapiens (Human).